The sequence spans 747 residues: MARSKTAQPKHSLRKIAVVVATAVSGMSVYAQAAVEPKEDTITVTAAPAPQESAWGPAATIAARQSATGTKTDTPIQKVPQSISVVTAEEMALHQPKSVKEALSYTPGVSVGTRGASNTYDHLIIRGFAAEGQSQNNYLNGLKLQGNFYNDAVIDPYMLERAEIMRGPVSVLYGKSSPGGLLNMVSKRPTTEPLKEVQFKAGTDSLFQTGFDFSDSLDDDGVYSYRLTGLARSANAQQKGSEEQRYAIAPAFTWRPDDKTNFTFLSYFQNEPETGYYGWLPKEGTVEPLPNGKRLPTDFNEGAKNNTYSRNEKMVGYSFDHEFNDTFTVRQNLRFAENKTSQNSVYGYGVCSDPANAYSKQCAALAPADKGHYLARKYVVDDEKLQNFSVDTQLQSKFATGDIDHTLLTGVDFMRMRNDINAWFGYDDSVPLLNLYNPVNTDFDFNAKDPANSGPYRILNKQKQTGVYVQDQAQWDKVLVTLGGRYDWADQESLNRVAGTTDKRDDKQFTWRGGVNYLFDNGVTPYFSYSESFEPSSQVGKDGNIFAPSKGKQYEVGVKYVPEDRPIVVTGAVYNLTKTNNLMADPEGSFFSVEGGEIRARGVEIEAKAALSASVNVVGSYTYTDAEYTTDTTYKGNTPAQVPKHMASLWADYTFFDGPLSGLTLGTGGRYTGSSYGDPANSFKVGSYTVVDALVRYDLARVGMAGSNVALHVNNLFDREYVASCFNTYGCFWGAERQVVATATFRF.

An N-terminal signal peptide occupies residues 1–33 (MARSKTAQPKHSLRKIAVVVATAVSGMSVYAQA). Residues 34–192 (AVEPKEDTIT…NMVSKRPTTE (159 aa)) lie on the Periplasmic side of the membrane. The TonB box signature appears at 40–47 (DTITVTAA). Residues 75–187 (PIQKVPQSIS…PGGLLNMVSK (113 aa)) form the TBDR plug domain. Residues arginine 114, glutamine 133, and 148 to 149 (FY) each bind ferrichrome. The region spanning 192–747 (EPLKEVQFKA…QVVATATFRF (556 aa)) is the TBDR beta-barrel domain. Residues 193 to 201 (PLKEVQFKA) traverse the membrane as a beta stranded segment. Residues 202-206 (GTDSL) are Extracellular-facing. A beta stranded transmembrane segment spans residues 207–215 (FQTGFDFSD). Over 216–222 (SLDDDGV) the chain is Periplasmic. A beta stranded membrane pass occupies residues 223 to 231 (YSYRLTGLA). Residues 232–245 (RSANAQQKGSEEQR) are Extracellular-facing. A beta stranded transmembrane segment spans residues 246–255 (YAIAPAFTWR). Topologically, residues 256 to 259 (PDDK) are periplasmic. A beta stranded transmembrane segment spans residues 260–268 (TNFTFLSYF). The Extracellular segment spans residues 269–312 (QNEPETGYYGWLPKEGTVEPLPNGKRLPTDFNEGAKNNTYSRNE). 277–279 (YGW) is a binding site for ferrichrome. Residues 313–321 (KMVGYSFDH) traverse the membrane as a beta stranded segment. Over 322–326 (EFNDT) the chain is Periplasmic. The beta stranded transmembrane segment at 327-335 (FTVRQNLRF) threads the bilayer. Over 336 to 387 (AENKTSQNSVYGYGVCSDPANAYSKQCAALAPADKGHYLARKYVVDDEKLQN) the chain is Extracellular. 346-348 (YGY) lines the ferrichrome pocket. Cysteines 351 and 362 form a disulfide. Residues 388-396 (FSVDTQLQS) form a beta stranded membrane-spanning segment. The Periplasmic segment spans residues 397 to 404 (KFATGDID). Residues 405–413 (HTLLTGVDF) traverse the membrane as a beta stranded segment. Residues 414-464 (MRMRNDINAWFGYDDSVPLLNLYNPVNTDFDFNAKDPANSGPYRILNKQKQ) are Extracellular-facing. Phenylalanine 424 contacts ferrichrome. Residues 465–473 (TGVYVQDQA) form a beta stranded membrane-spanning segment. Topologically, residues 474-477 (QWDK) are periplasmic. The chain crosses the membrane as a beta stranded span at residues 478–486 (VLVTLGGRY). At 487-508 (DWADQESLNRVAGTTDKRDDKQ) the chain is on the extracellular side. Residues 509–517 (FTWRGGVNY) form a beta stranded membrane-spanning segment. Residues 518-522 (LFDNG) lie on the Periplasmic side of the membrane. The chain crosses the membrane as a beta stranded span at residues 523–531 (VTPYFSYSE). Residues 532 to 551 (SFEPSSQVGKDGNIFAPSKG) lie on the Extracellular side of the membrane. Residues 552–560 (KQYEVGVKY) form a beta stranded membrane-spanning segment. The Periplasmic segment spans residues 561 to 565 (VPEDR). The chain crosses the membrane as a beta stranded span at residues 566–574 (PIVVTGAVY). Residues 575 to 601 (NLTKTNNLMADPEGSFFSVEGGEIRAR) are Extracellular-facing. Residues 602 to 610 (GVEIEAKAA) form a beta stranded membrane-spanning segment. Over 611 to 613 (LSA) the chain is Periplasmic. Residues 614 to 622 (SVNVVGSYT) traverse the membrane as a beta stranded segment. Topologically, residues 623–645 (YTDAEYTTDTTYKGNTPAQVPKH) are extracellular. A beta stranded membrane pass occupies residues 646 to 654 (MASLWADYT). The Periplasmic portion of the chain corresponds to 655–661 (FFDGPLS). Residues 662–670 (GLTLGTGGR) form a beta stranded membrane-spanning segment. Over 671–689 (YTGSSYGDPANSFKVGSYT) the chain is Extracellular. A beta stranded membrane pass occupies residues 690 to 698 (VVDALVRYD). The Periplasmic portion of the chain corresponds to 699-705 (LARVGMA). The chain crosses the membrane as a beta stranded span at residues 706–714 (GSNVALHVN). The Extracellular segment spans residues 715 to 737 (NLFDREYVASCFNTYGCFWGAER). A disulfide bridge links cysteine 725 with cysteine 731. The short motif at 730-747 (GCFWGAERQVVATATFRF) is the TonB C-terminal box element. A ferrichrome-binding site is contributed by alanine 735. Residues 738–746 (QVVATATFR) traverse the membrane as a beta stranded segment. Residue phenylalanine 747 is a topological domain, periplasmic.

It belongs to the TonB-dependent receptor family. As to quaternary structure, monomer. Interacts with TonB. Interacts with Escherichia phage T5 receptor-binding protein pb5 (RBP-pb5); this interaction is necessary for the entry of the viral genome into the host cell.

The protein resides in the cell outer membrane. With respect to regulation, binding of ferrichrome or colicin M enhances the interaction between FhuA and TonB. TonB activates FhuA through interaction with the beta-barrel. Functionally, involved in the uptake of iron in complex with ferrichrome, a hydroxamate-type siderophore. Binds and transports ferrichrome-iron across the outer membrane. In addition to its role in ferrichrome-iron transport, transports the antibiotic albomycin, which is a structural analog of ferrichrome, and acts as a receptor for colicin M, microcin J25 and bacteriophages T1, T5, phi80 and UC-1. The energy source, which is required for all FhuA functions except infection by phage T5, is provided by the inner membrane TonB system. The protein is Ferrichrome outer membrane transporter/phage receptor of Escherichia coli (strain K12).